A 375-amino-acid chain; its full sequence is Queuine tRNA-ribosyltransferase (375 aa).

The Proton acceptor role is filled by Asp89. Residues 89-93, Asp143, Gln187, and Gly214 each bind substrate; that span reads DSGGF. Residues 245–251 form an RNA binding region; sequence GVGKPED. Asp264 serves as the catalytic Nucleophile. Positions 269–273 are RNA binding; important for wobble base 34 recognition; that stretch reads TRNAR. Positions 302, 304, 307, and 333 each coordinate Zn(2+).

The protein belongs to the queuine tRNA-ribosyltransferase family. Homodimer. Within each dimer, one monomer is responsible for RNA recognition and catalysis, while the other monomer binds to the replacement base PreQ1. The cofactor is Zn(2+).

It carries out the reaction 7-aminomethyl-7-carbaguanine + guanosine(34) in tRNA = 7-aminomethyl-7-carbaguanosine(34) in tRNA + guanine. The protein operates within tRNA modification; tRNA-queuosine biosynthesis. Its function is as follows. Catalyzes the base-exchange of a guanine (G) residue with the queuine precursor 7-aminomethyl-7-deazaguanine (PreQ1) at position 34 (anticodon wobble position) in tRNAs with GU(N) anticodons (tRNA-Asp, -Asn, -His and -Tyr). Catalysis occurs through a double-displacement mechanism. The nucleophile active site attacks the C1' of nucleotide 34 to detach the guanine base from the RNA, forming a covalent enzyme-RNA intermediate. The proton acceptor active site deprotonates the incoming PreQ1, allowing a nucleophilic attack on the C1' of the ribose to form the product. After dissociation, two additional enzymatic reactions on the tRNA convert PreQ1 to queuine (Q), resulting in the hypermodified nucleoside queuosine (7-(((4,5-cis-dihydroxy-2-cyclopenten-1-yl)amino)methyl)-7-deazaguanosine). The polypeptide is Queuine tRNA-ribosyltransferase (Salmonella arizonae (strain ATCC BAA-731 / CDC346-86 / RSK2980)).